Reading from the N-terminus, the 383-residue chain is Putative dehydratase subunit YjiM (383 aa).

The protein belongs to the FldB/FldC dehydratase alpha/beta subunit family.

In Escherichia coli (strain K12), this protein is Putative dehydratase subunit YjiM (yjiM).